Reading from the N-terminus, the 93-residue chain is uncharacterized protein (93 aa).

The disordered stretch occupies residues 41–62; sequence RSANRIPTTSSTSTSGTIPTTT. The span at 46–62 shows a compositional bias: low complexity; that stretch reads IPTTSSTSTSGTIPTTT.

This is an uncharacterized protein from Dictyostelium discoideum (Social amoeba).